A 357-amino-acid chain; its full sequence is Serine protease 1 (357 aa).

Positions 1 to 29 (MRRTTRARTGLSALLLAASLGLGAAPAGA) are cleaved as a signal peptide. Positions 30-170 (DAPQRPAPTP…TRVPGVFQRE (141 aa)) are excised as a propeptide. Cysteines 184 and 204 form a disulfide. Residues histidine 203, aspartate 232, and serine 313 each act as charge relay system in the active site. Residues cysteine 307 and cysteine 333 are joined by a disulfide bond.

This sequence belongs to the peptidase S1 family.

The protein resides in the secreted. Serine protease that preferentially cleaves peptide bonds on the C-terminal side of aspartate and glutamate with a 10-fold higher reactivity for a glutamyl bond than an aspartyl bond. In Streptomyces fradiae (Streptomyces roseoflavus), this protein is Serine protease 1.